The sequence spans 44 residues: Non-structural protein 7b (44 aa).

A helical membrane pass occupies residues 9–29; that stretch reads FYLCFLAFLLFLVLIMLIIFW.

The protein resides in the host membrane. The chain is Non-structural protein 7b from Bat coronavirus Rp3/2004 (BtCoV/Rp3/2004).